Reading from the N-terminus, the 490-residue chain is Glutamyl-tRNA(Gln) amidotransferase subunit A (490 aa).

Active-site charge relay system residues include K78 and S153. The active-site Acyl-ester intermediate is S177.

Belongs to the amidase family. GatA subfamily. As to quaternary structure, heterotrimer of A, B and C subunits.

It catalyses the reaction L-glutamyl-tRNA(Gln) + L-glutamine + ATP + H2O = L-glutaminyl-tRNA(Gln) + L-glutamate + ADP + phosphate + H(+). Functionally, allows the formation of correctly charged Gln-tRNA(Gln) through the transamidation of misacylated Glu-tRNA(Gln) in organisms which lack glutaminyl-tRNA synthetase. The reaction takes place in the presence of glutamine and ATP through an activated gamma-phospho-Glu-tRNA(Gln). The polypeptide is Glutamyl-tRNA(Gln) amidotransferase subunit A (Desulforapulum autotrophicum (strain ATCC 43914 / DSM 3382 / VKM B-1955 / HRM2) (Desulfobacterium autotrophicum)).